A 214-amino-acid polypeptide reads, in one-letter code: 3-isopropylmalate dehydratase small subunit (214 aa).

It belongs to the LeuD family. LeuD type 1 subfamily. Heterodimer of LeuC and LeuD.

The enzyme catalyses (2R,3S)-3-isopropylmalate = (2S)-2-isopropylmalate. It functions in the pathway amino-acid biosynthesis; L-leucine biosynthesis; L-leucine from 3-methyl-2-oxobutanoate: step 2/4. Catalyzes the isomerization between 2-isopropylmalate and 3-isopropylmalate, via the formation of 2-isopropylmaleate. The polypeptide is 3-isopropylmalate dehydratase small subunit (Pseudomonas putida (strain ATCC 47054 / DSM 6125 / CFBP 8728 / NCIMB 11950 / KT2440)).